Here is a 611-residue protein sequence, read N- to C-terminus: Protein halfway (611 aa).

An N-terminal signal peptide occupies residues 1–22; it reads MLAYTHGTWLLLLLLLVAGACA. 3 disordered regions span residues 31 to 64, 90 to 132, and 154 to 185; these read DPAALGEESTPHAHAHPQARHHHHAHPHAPLKED, SLAE…AAPE, and GRAETSEGQGSTVAQSEAQNRGGQGNSQCQCR. Residues 43-59 show a composition bias toward basic residues; that stretch reads AHAHPQARHHHHAHPHA. Positions 90-101 are enriched in polar residues; it reads SLAETQSMSDPG. The segment covering 102–123 has biased composition (low complexity); that stretch reads SVTDTTSTSTSHSTSTTSTTSP. Residues 159-183 are compositionally biased toward polar residues; sequence SEGQGSTVAQSEAQNRGGQGNSQCQ. N-linked (GlcNAc...) asparagine glycosylation is found at asparagine 221, asparagine 246, asparagine 264, and asparagine 269. 4 LRR repeats span residues 236-257, 259-280, 283-304, and 313-334; these read SLQSLAVTDGNITRLVNAFPRL, ALKCLNISNNNISEIHSRAVKD, HLEFFGMSNNNLSLVPHRNQNK, and NMRMLCTPLNEIIYTESINFLN. One can recognise an LRRNT domain in the interval 361-416; it reads ENRKRCVTNCPVIPNYGSCNCTLENIMIIQDNQSKPQCHVDCSNLGLVELPQRLPD. 3 LRR repeats span residues 417–438, 443–464, and 468–489; these read NTFMLNITNNKITSLGDYFHTN, NINRLLADNNQISSIYEFEGTK, and TFQRIYMRNNSLSKIPEYFLNN. The 50-residue stretch at 505 to 554 folds into the LRRCT domain; the sequence is NKLQCDCNSAKTLQNWLKERSSDIPDYMEIRCRNMPQRVIELQEAKLCQS.

In terms of biological role, has a role in the ecdysone induced cascade; probably indirect control of 'late' ecdysone genes. The protein is Protein halfway of Drosophila melanogaster (Fruit fly).